The sequence spans 85 residues: CDC42 small effector protein homolog (85 aa).

Residues C14 and C15 are each lipidated (S-palmitoyl cysteine). One can recognise a CRIB domain in the interval 37-50 (IGNPTNFVHTGHIG). Phosphoserine is present on residues S78 and S81.

It belongs to the CDC42SE/SPEC family.

The protein resides in the cytoplasm. It localises to the cytoskeleton. It is found in the cell membrane. In terms of biological role, probably involved in the organization of the actin cytoskeleton by acting downstream of CDC42, inducing actin filament assembly. In Drosophila melanogaster (Fruit fly), this protein is CDC42 small effector protein homolog (Spec2).